A 743-amino-acid polypeptide reads, in one-letter code: Catalase-peroxidase (743 aa).

A disordered region spans residues 1–22 (MEKQSNDAAVAGAPNDHGAAKC). Residues 105-227 (WHSAGTYRIT…LGAVQMGLIY (123 aa)) constitute a cross-link (tryptophyl-tyrosyl-methioninium (Trp-Tyr) (with M-253)). The active-site Proton acceptor is histidine 106. The tryptophyl-tyrosyl-methioninium (Tyr-Met) (with W-105) cross-link spans 227–253 (YVNPEGPNGNPDPVAAAKDIRETFFRM). Residue histidine 268 coordinates heme b.

It belongs to the peroxidase family. Peroxidase/catalase subfamily. Homodimer or homotetramer. The cofactor is heme b. Post-translationally, formation of the three residue Trp-Tyr-Met cross-link is important for the catalase, but not the peroxidase activity of the enzyme.

It catalyses the reaction H2O2 + AH2 = A + 2 H2O. It carries out the reaction 2 H2O2 = O2 + 2 H2O. Bifunctional enzyme with both catalase and broad-spectrum peroxidase activity. The sequence is that of Catalase-peroxidase from Solibacter usitatus (strain Ellin6076).